Consider the following 159-residue polypeptide: Transmembrane protein 42 (159 aa).

A run of 4 helical transmembrane segments spans residues 37–57 (FWGV…AASA), 68–88 (GFCV…WTFF), 100–120 (IASV…GFVL), and 124–144 (CQEV…TLIH).

The protein localises to the membrane. This Bos taurus (Bovine) protein is Transmembrane protein 42 (TMEM42).